The following is a 474-amino-acid chain: Stabilizer of axonemal microtubules 1 (474 aa).

12 mn regions span residues 30–64, 65–97, 98–131, 132–165, 166–199, 200–232, 233–266, 267–299, 300–332, 333–366, 367–400, and 401–434; these read KPCL…KGSI, PMEG…PSEE, NMDL…PYSN, KMEY…PASV, RFDN…LCNI, PLED…PCEI, PFES…GLDM, PFSN…PPED, SMDL…RKSG, RFEG…FPTE, PLDC…RGNV, and PVEG…TFEE. Positions 318-350 are disordered; the sequence is PARSCRPAPQIRKSGRFEGSSTTKDDYKQWSSM. Residues 444-474 form a disordered region; sequence KPVSQAGSQQSSHLSVDDSENPSQRKLEVSA. Positions 448–457 are enriched in polar residues; that stretch reads QAGSQQSSHL.

The protein belongs to the FAM154 family. Associates with microtubules via the Mn regions.

The protein localises to the cytoplasm. It localises to the cytoskeleton. Its subcellular location is the microtubule organizing center. It is found in the centrosome. The protein resides in the centriole. The protein localises to the cilium basal body. It localises to the cilium axoneme. Its subcellular location is the flagellum axoneme. May play a role in the regulation of cilium length. Stabilizes microtubules at low temperature. The chain is Stabilizer of axonemal microtubules 1 (SAXO1) from Macaca fascicularis (Crab-eating macaque).